A 290-amino-acid polypeptide reads, in one-letter code: Porphobilinogen deaminase (290 aa).

S-(dipyrrolylmethanemethyl)cysteine is present on Cys237.

This sequence belongs to the HMBS family. Monomer. Requires dipyrromethane as cofactor.

It catalyses the reaction 4 porphobilinogen + H2O = hydroxymethylbilane + 4 NH4(+). It participates in porphyrin-containing compound metabolism; protoporphyrin-IX biosynthesis; coproporphyrinogen-III from 5-aminolevulinate: step 2/4. Tetrapolymerization of the monopyrrole PBG into the hydroxymethylbilane pre-uroporphyrinogen in several discrete steps. This is Porphobilinogen deaminase from Clostridium botulinum (strain Loch Maree / Type A3).